We begin with the raw amino-acid sequence, 295 residues long: Small ribosomal subunit protein uS2 (295 aa).

An N-acetylserine modification is found at Ser2. The residue at position 43 (Ser43) is a Phosphoserine. Lys52 carries the post-translational modification N6-acetyllysine. The segment at 54–113 (TWEKLLLAARAIVAIENPADVSVISSRNTGQRAVLKFAAATGATPIAGRFTPGTFTNQIQ) is interaction with PPP1R16B. Lys89 carries the N6-acetyllysine; alternate modification. Residue Lys89 forms a Glycyl lysine isopeptide (Lys-Gly) (interchain with G-Cter in SUMO2); alternate linkage. At Thr97 the chain carries Phosphothreonine. Laminin-binding regions lie at residues 161–180 (IPCN…MLAR) and 205–229 (RDPE…EFQG). 5 [DE]-W-[ST] repeats span residues 230–232 (EWT), 247–249 (DWS), 266–268 (DWS), 275–277 (DWS), and 293–295 (EWS). Residues 242–295 (QPEVADWSEGVQVPSVPIQQFPTEDWSAQPATEDWSAAPTAQATEWVGATTEWS) are laminin-binding. The tract at residues 266–295 (DWSAQPATEDWSAAPTAQATEWVGATTEWS) is disordered.

Belongs to the universal ribosomal protein uS2 family. Monomer (37LRP) and homodimer (67LR). Component of the small ribosomal subunit. Mature ribosomes consist of a small (40S) and a large (60S) subunit. The 40S subunit contains about 33 different proteins and 1 molecule of RNA (18S). The 60S subunit contains about 49 different proteins and 3 molecules of RNA (28S, 5.8S and 5S). Interacts with RPS21. Interacts with several laminins including at least LAMB1. Interacts with MDK. The mature dimeric form interacts with PPP1R16B (via its fourth ankyrin repeat). Interacts with PPP1CA only in the presence of PPP1R16B. Acylated. Acylation may be a prerequisite for conversion of the monomeric 37 kDa laminin receptor precursor (37LRP) to the mature dimeric 67 kDa laminin receptor (67LR), and may provide a mechanism for membrane association. In terms of processing, cleaved by stromelysin-3 (ST3) at the cell surface. Cleavage by stromelysin-3 may be a mechanism to alter cell-extracellular matrix interactions.

It localises to the cell membrane. The protein resides in the cytoplasm. Its subcellular location is the nucleus. Required for the assembly and/or stability of the 40S ribosomal subunit. Required for the processing of the 20S rRNA-precursor to mature 18S rRNA in a late step of the maturation of 40S ribosomal subunits. Also functions as a cell surface receptor for laminin. Plays a role in cell adhesion to the basement membrane and in the consequent activation of signaling transduction pathways. May play a role in cell fate determination and tissue morphogenesis. Also acts as a receptor for several other ligands, including the pathogenic prion protein, viruses, and bacteria. Acts as a PPP1R16B-dependent substrate of PPP1CA. The protein is Small ribosomal subunit protein uS2 of Chlorocebus aethiops (Green monkey).